Consider the following 331-residue polypeptide: Ketol-acid reductoisomerase (NADP(+)) (331 aa).

The KARI N-terminal Rossmann domain maps to 2 to 182 (ARMYYDEDAN…GGTRGGVLET (181 aa)). NADP(+) is bound by residues 25 to 28 (YGSQ), Ser-51, Ser-53, and 83 to 86 (DEVQ). Residue His-108 is part of the active site. Gly-134 is an NADP(+) binding site. The KARI C-terminal knotted domain maps to 183–328 (TFREETETDL…KDLRAMFSWL (146 aa)). 4 residues coordinate Mg(2+): Asp-191, Glu-195, Glu-227, and Glu-231. Ser-252 lines the substrate pocket.

Belongs to the ketol-acid reductoisomerase family. It depends on Mg(2+) as a cofactor.

It catalyses the reaction (2R)-2,3-dihydroxy-3-methylbutanoate + NADP(+) = (2S)-2-acetolactate + NADPH + H(+). The catalysed reaction is (2R,3R)-2,3-dihydroxy-3-methylpentanoate + NADP(+) = (S)-2-ethyl-2-hydroxy-3-oxobutanoate + NADPH + H(+). It participates in amino-acid biosynthesis; L-isoleucine biosynthesis; L-isoleucine from 2-oxobutanoate: step 2/4. It functions in the pathway amino-acid biosynthesis; L-valine biosynthesis; L-valine from pyruvate: step 2/4. Involved in the biosynthesis of branched-chain amino acids (BCAA). Catalyzes an alkyl-migration followed by a ketol-acid reduction of (S)-2-acetolactate (S2AL) to yield (R)-2,3-dihydroxy-isovalerate. In the isomerase reaction, S2AL is rearranged via a Mg-dependent methyl migration to produce 3-hydroxy-3-methyl-2-ketobutyrate (HMKB). In the reductase reaction, this 2-ketoacid undergoes a metal-dependent reduction by NADPH to yield (R)-2,3-dihydroxy-isovalerate. The sequence is that of Ketol-acid reductoisomerase (NADP(+)) from Trichormus variabilis (strain ATCC 29413 / PCC 7937) (Anabaena variabilis).